The following is a 727-amino-acid chain: DNA ligase (727 aa).

NAD(+) is bound by residues 71 to 75 (DGEFD), 120 to 121 (SL), and Glu150. Lys152 functions as the N6-AMP-lysine intermediate in the catalytic mechanism. NAD(+)-binding residues include Arg173, Glu213, Lys329, and Lys353. Zn(2+) contacts are provided by Cys447, Cys450, Cys466, and Cys472. The region spanning 636–725 (SIERHLTGLS…PEAAAEAALP (90 aa)) is the BRCT domain.

The protein belongs to the NAD-dependent DNA ligase family. LigA subfamily. Mg(2+) is required as a cofactor. Requires Mn(2+) as cofactor.

It carries out the reaction NAD(+) + (deoxyribonucleotide)n-3'-hydroxyl + 5'-phospho-(deoxyribonucleotide)m = (deoxyribonucleotide)n+m + AMP + beta-nicotinamide D-nucleotide.. DNA ligase that catalyzes the formation of phosphodiester linkages between 5'-phosphoryl and 3'-hydroxyl groups in double-stranded DNA using NAD as a coenzyme and as the energy source for the reaction. It is essential for DNA replication and repair of damaged DNA. This Saccharopolyspora erythraea (strain ATCC 11635 / DSM 40517 / JCM 4748 / NBRC 13426 / NCIMB 8594 / NRRL 2338) protein is DNA ligase.